We begin with the raw amino-acid sequence, 437 residues long: mRNA cleavage and polyadenylation factor CLP1 (437 aa).

ATP is bound by residues glutamate 23 and serine 122–serine 127.

It belongs to the Clp1 family. Clp1 subfamily. Component of a pre-mRNA cleavage factor complex. Interacts directly with PCF11.

Its subcellular location is the nucleus. Required for endonucleolytic cleavage during polyadenylation-dependent pre-mRNA 3'-end formation. This Kluyveromyces lactis (strain ATCC 8585 / CBS 2359 / DSM 70799 / NBRC 1267 / NRRL Y-1140 / WM37) (Yeast) protein is mRNA cleavage and polyadenylation factor CLP1.